The primary structure comprises 226 residues: Ribonuclease 3 (226 aa).

One can recognise an RNase III domain in the interval 6-128; that stretch reads MKKLQKFIGY…IIASIFLDSN (123 aa). Glu-41 provides a ligand contact to Mg(2+). The active site involves Asp-45. Mg(2+)-binding residues include Asn-114 and Glu-117. Glu-117 is an active-site residue. In terms of domain architecture, DRBM spans 155-225; sequence DPKTRLQEYL…AQNALIRLEV (71 aa).

It belongs to the ribonuclease III family. In terms of assembly, homodimer. It depends on Mg(2+) as a cofactor.

Its subcellular location is the cytoplasm. It carries out the reaction Endonucleolytic cleavage to 5'-phosphomonoester.. Its function is as follows. Digests double-stranded RNA. Involved in the processing of primary rRNA transcript to yield the immediate precursors to the large and small rRNAs (23S and 16S). Processes some mRNAs, and tRNAs when they are encoded in the rRNA operon. Processes pre-crRNA and tracrRNA of type II CRISPR loci if present in the organism. The polypeptide is Ribonuclease 3 (Buchnera aphidicola subsp. Cinara cedri (strain Cc)).